A 139-amino-acid chain; its full sequence is Protein Turandot B (139 aa).

The first 21 residues, 1 to 21, serve as a signal peptide directing secretion; it reads MNFKTALICFALLLIGTLCSA.

It belongs to the Turandot family.

The protein localises to the secreted. In terms of biological role, a humoral factor that may play a role in stress tolerance. This Drosophila simulans (Fruit fly) protein is Protein Turandot B.